Consider the following 148-residue polypeptide: MKYQKLENQEANWKWIYLIRKHREGENITRYEERSLQEAKAQELLESQNYPEKIEEWIKNHLSPALPIKLDQAIRARRKRFFNGEKQHTKKKSIDLEYAVWLRLSKYSRKMKMTLSETITYMIDERESKAQFENQMAAMKTSLKNLLK.

This sequence belongs to the MatP family. As to quaternary structure, homodimer.

The protein localises to the cytoplasm. Required for spatial organization of the terminus region of the chromosome (Ter macrodomain) during the cell cycle. Prevents early segregation of duplicated Ter macrodomains during cell division. Binds specifically to matS, which is a 13 bp signature motif repeated within the Ter macrodomain. The chain is Macrodomain Ter protein from Haemophilus influenzae (strain ATCC 51907 / DSM 11121 / KW20 / Rd).